Here is a 375-residue protein sequence, read N- to C-terminus: DNA replication and repair protein RecF (375 aa).

30 to 37 serves as a coordination point for ATP; it reads GENAQGKT.

The protein belongs to the RecF family.

It localises to the cytoplasm. In terms of biological role, the RecF protein is involved in DNA metabolism; it is required for DNA replication and normal SOS inducibility. RecF binds preferentially to single-stranded, linear DNA. It also seems to bind ATP. The chain is DNA replication and repair protein RecF from Latilactobacillus sakei subsp. sakei (strain 23K) (Lactobacillus sakei subsp. sakei).